We begin with the raw amino-acid sequence, 2278 residues long: MRGHQFKSWIFELREILREIKNSHHFLDSWTQFNSVGSFIHIFFHQERFLKLFDPRIWSILLSRNSQGSPSNRYFTIKGVILFVVAVLIYRINNRNMVERKNLYLIGLLPIPMNSIGPRNDTLEESVGSSNINRLIVSLLYLPKGKKISESCFLNPKESTWVLPITKKCSMPESNWGSRWWRNWIGKKRDSSCKISNETVAGIEILFKEKDLKYLEFLFVYYMDDPIRKDHDWELFDRLSLRKSRNRINLNSGPLFEILVKHWISYLMSAFREKIPIEVEGFFKQQGAGSTIQSNDIEHVSHLFSRNKWAISLQNCAQFHMWQFRQDLFVSWGKNPPESDFLRNVSRENWIWLDNVWLVNKDRFFSKVQNVSSNIQYDSTRSSFVQVTDSSQLKGSSDQSRDHLDSISNEDSEYHTLINQREIQQRKERSILWDPSFLQTERKEIESGRFPKCLSGYSSMSRLFTEREKQMINHLFPEEIEEFLGNPTRSVRSFFSDRWSELHLGSNPTERSTRDQKLLKKQQDLSFVPSRRSEKKEMVNIFKIITYLQNTVSIHPISSDPGCDMVPKDEPDMDSSNKISFLNKNPFFDLFHLFHDRNRGGYTLHYDFASEERFQEMADLFTLSITEPDLVYHKGFAFSIDSCGLDQKQFLNEARDESKKKSLLVLPPIFYEENESFSRRIRKKWVRISCGNDLEDPKPKIVVFASNNIMEAVTQYRLIRNLIQIQYSTYGYIRNVLNRFFLMNRSDRNFEYGIQRDQIGKDTLNHRTIMKYTINQYLSNLKKSQKKWFEPLILISRTERSMNRDPDAYRYKWSNGSKSFQEHLEQSVSKQKSRFQVVFDRLRINQYSIDWSEVIDKKDLSKSLRFFLSKSLLFLSKLLLFLSNSLPFFCVSFGNIPIHRSEIYIYEELKGPNDQLCNQLLESIGLQIVHLKKLKPFLLDDHDTSQKSKFLINGGTISPFLFNKIPKWMIDSFHTRNNRRKSFDNPDSYFSMIFHDQDNWLNPVKPFHRSSLISSFYKANRLRFLNNPHHFCFYWNTRFPFSVEKARINNSDFTYGQFLNILFIRNKIFSLCVGKKKHAFWGRDTISPIESQVSNIFIPNDFPQSGDETYNLYKSFHFPSRSDPFVRRAIYSIADISGTPLTEGQIVNFERTYCQPLSDMNLSDSEGKNLHQYLNFNSNMGLIHTPCSEKDLSSEKRKKWSLCLKKCVEKGQTYRTFQRDSAFSTLSKWNLFQTYMPWFLTSTGYKYLNLIFLDTFSDLLPILSSSQKFVSIFPDIMHGSGISWRILQKKLCLPQWNLISEISSKCLHNLLLSEEMIHRNNESPLISTHLRSPNAREFLYSILFLLLVAGYLVRTHLLFVSRASSELQTEFERVKSLMTPSSMIELRKLLDRYPTSEPNSFWLKNLFLVALEQLGDSLEEIRGSASGGNMLGPAYGVKSIRSKKKDWNINLIEIIDLIPNPINRITFSRNTRHLSHTSKEIYSLIRKRKNVNGDWIDEKIESWVANSDSIDDEEREFLVQFSTLTTENRIDQILLSLTHSDHLSKNDSGYQMIEQPGAIYLRYLVDIHKKHLMNYEFNPSCLAERRIFLAHYQTITYSQTSCGENSFHFPSHGKPFSLRLALSPSRGILVIGSIGTGRSYLVKYLATNSYVPFITVFLNKFLDNKSKGFLLDEIDIDDSDDIDDSDNLDASDDIDRDLDTELELLTRMNGLTVDMMPEIDRFYITLQFELAKAMSPCIIWIPNIHDLDVNESNDLSLGLLVNHLSRDCERCSTRNILVIASTHIPQKVDPALIAPNKLNTCIKIRRLLIPQQRKHFFTLSYTRGFHLEKKMFHTNGFGSITMGSNARDLVALTNEVLSISITQKKSIIDTNTIRSALHRQTWDLRSQVRSVQDHGILFYQIGRAVAQNVLLSNCPIDPISIYMKKKSCNEGDSYLYKWYFELGTSMKRLTILLYLLSCSAGSVAQDLWSLSVPDEKNGITSYGLVENDSDLVHGLLEVEGALVGSSRTEKDCSQFDNDRVTLLLRPEPRNPLDMMQKGSWSILDQRFLYEKYESEFEEGEGEGALDPQEDLFNHIVWAPRIWRPWGFLFDCIERPNELGFPYWSRSFRGKRIIYDEEDELQENDSGFLQSGTMQYQTRDRSQGLFRISQFIWDPADPLFFLFKDQPPGSVFSHRELFADEEMSKGLLTSQTDPPTSLYKRWFIKNTQEKHFELLINRQRWLRTNSSLSNGSFRSNTLSESYQYLSNLFLSNGTLLDQMPKTLLRKRWLFPDEMKIGFM.

It belongs to the Ycf2 family.

Its subcellular location is the plastid. The protein resides in the chloroplast stroma. It localises to the chromoplast stroma. Probable ATPase of unknown function. Its presence in a non-photosynthetic plant (Epifagus virginiana) and experiments in tobacco indicate that it has an essential function which is probably not related to photosynthesis. This is Protein Ycf2 (ycf2-A) from Solanum lycopersicum (Tomato).